A 130-amino-acid polypeptide reads, in one-letter code: Ribosome-binding factor A (130 aa).

The protein belongs to the RbfA family. In terms of assembly, monomer. Binds 30S ribosomal subunits, but not 50S ribosomal subunits or 70S ribosomes.

The protein resides in the cytoplasm. Its function is as follows. One of several proteins that assist in the late maturation steps of the functional core of the 30S ribosomal subunit. Associates with free 30S ribosomal subunits (but not with 30S subunits that are part of 70S ribosomes or polysomes). Required for efficient processing of 16S rRNA. May interact with the 5'-terminal helix region of 16S rRNA. This Alkalilimnicola ehrlichii (strain ATCC BAA-1101 / DSM 17681 / MLHE-1) protein is Ribosome-binding factor A.